The following is a 420-amino-acid chain: UDP-N-acetylglucosamine 1-carboxyvinyltransferase (420 aa).

22–23 (KN) contributes to the phosphoenolpyruvate binding site. Arginine 93 provides a ligand contact to UDP-N-acetyl-alpha-D-glucosamine. Cysteine 117 serves as the catalytic Proton donor. 2-(S-cysteinyl)pyruvic acid O-phosphothioketal is present on cysteine 117. Aspartate 307 and isoleucine 329 together coordinate UDP-N-acetyl-alpha-D-glucosamine.

This sequence belongs to the EPSP synthase family. MurA subfamily.

Its subcellular location is the cytoplasm. It catalyses the reaction phosphoenolpyruvate + UDP-N-acetyl-alpha-D-glucosamine = UDP-N-acetyl-3-O-(1-carboxyvinyl)-alpha-D-glucosamine + phosphate. The protein operates within cell wall biogenesis; peptidoglycan biosynthesis. Cell wall formation. Adds enolpyruvyl to UDP-N-acetylglucosamine. This is UDP-N-acetylglucosamine 1-carboxyvinyltransferase from Shewanella pealeana (strain ATCC 700345 / ANG-SQ1).